A 210-amino-acid polypeptide reads, in one-letter code: UPF0301 protein CPS_1252 (210 aa).

Belongs to the UPF0301 (AlgH) family.

This is UPF0301 protein CPS_1252 from Colwellia psychrerythraea (strain 34H / ATCC BAA-681) (Vibrio psychroerythus).